The sequence spans 446 residues: Protein adenylyltransferase FICD (446 aa).

At 1-18 (MAVTECEWASLGSRIGLR) the chain is on the cytoplasmic side. The chain crosses the membrane as a helical; Signal-anchor for type II membrane protein span at residues 19–39 (AALVLLSGSLLVVLFPLSGLE). The Lumenal segment spans residues 40–446 (HQYRTALNIL…ECKQTITIKT (407 aa)). 2 TPR repeats span residues 94–127 (AKAA…DPDH) and 128–161 (VDAL…SPHN). The short motif at 218–223 (TVAIEG) is the Inhibitory (S/T)XXXE(G/N) motif element. E222 serves as a coordination point for ATP. N263 carries N-linked (GlcNAc...) asparagine glycosylation. The 136-residue stretch at 273–408 (VTIDNILEIH…VRPFIRFIAK (136 aa)) folds into the Fido domain. 304–307 (VGHH) serves as a coordination point for ATP. H351 is an active-site residue. ATP is bound by residues 355–362 (DGNGRTSR), 387–388 (YY), and N395.

Belongs to the fic family. Homodimer. It depends on Mg(2+) as a cofactor. Mn(2+) serves as cofactor.

Its subcellular location is the endoplasmic reticulum membrane. It catalyses the reaction L-tyrosyl-[protein] + ATP = O-(5'-adenylyl)-L-tyrosyl-[protein] + diphosphate. The enzyme catalyses 3-O-(5'-adenylyl)-L-threonyl-[protein] + H2O = L-threonyl-[protein] + AMP + H(+). The catalysed reaction is L-threonyl-[protein] + ATP = 3-O-(5'-adenylyl)-L-threonyl-[protein] + diphosphate. With respect to regulation, the side chain of Glu-222 determines which of the two opposing activities (AMPylase or de-AMPylase) will take place. In response to endoplasmic reticulum stress, mediates de-AMPylase activity. Adenylyltransferase activity is inhibited by the inhibitory helix present at the N-terminus: Glu-222 binds ATP and competes with ATP-binding at Arg-362, thereby preventing adenylyltransferase activity. In unstressed cells, disengagement of Glu-222 promotes adenylyltransferase activity. Activation dissociates ATP-binding from Glu-222, allowing ordered binding of the entire ATP moiety with the alpha-phosphate in an orientation that is productive for accepting an incoming target hydroxyl side chain. In terms of biological role, protein that can both mediate the addition of adenosine 5'-monophosphate (AMP) to specific residues of target proteins (AMPylation), and the removal of the same modification from target proteins (de-AMPylation), depending on the context. The side chain of Glu-222 determines which of the two opposing activities (AMPylase or de-AMPylase) will take place. Acts as a key regulator of the ERN1/IRE1-mediated unfolded protein response (UPR) by mediating AMPylation or de-AMPylation of HSPA5/BiP. In unstressed cells, acts as an adenylyltransferase by mediating AMPylation of HSPA5/BiP at 'Thr-518', thereby inactivating it. In response to endoplasmic reticulum stress, acts as a phosphodiesterase by mediating removal of ATP (de-AMPylation) from HSPA5/BiP at 'Thr-518', leading to restore HSPA5/BiP activity. In Xenopus tropicalis (Western clawed frog), this protein is Protein adenylyltransferase FICD.